A 131-amino-acid polypeptide reads, in one-letter code: Large ribosomal subunit protein bL12 (131 aa).

Belongs to the bacterial ribosomal protein bL12 family. As to quaternary structure, homodimer. Part of the ribosomal stalk of the 50S ribosomal subunit. Forms a multimeric L10(L12)X complex, where L10 forms an elongated spine to which 2 to 4 L12 dimers bind in a sequential fashion. Binds GTP-bound translation factors.

Its function is as follows. Forms part of the ribosomal stalk which helps the ribosome interact with GTP-bound translation factors. Is thus essential for accurate translation. This Prochlorococcus marinus (strain MIT 9301) protein is Large ribosomal subunit protein bL12.